The chain runs to 364 residues: Peptide chain release factor 2 (364 aa).

Residue Q252 is modified to N5-methylglutamine.

This sequence belongs to the prokaryotic/mitochondrial release factor family. In terms of processing, methylated by PrmC. Methylation increases the termination efficiency of RF2.

The protein localises to the cytoplasm. Its function is as follows. Peptide chain release factor 2 directs the termination of translation in response to the peptide chain termination codons UGA and UAA. The protein is Peptide chain release factor 2 of Clostridium perfringens (strain SM101 / Type A).